The chain runs to 397 residues: Aromatic-amino-acid aminotransferase (397 aa).

The substrate site is built by glycine 34, tyrosine 66, tryptophan 131, and asparagine 184. N6-(pyridoxal phosphate)lysine is present on lysine 247. Substrate-binding residues include arginine 281 and arginine 375.

This sequence belongs to the class-I pyridoxal-phosphate-dependent aminotransferase family. Homodimer. It depends on pyridoxal 5'-phosphate as a cofactor.

It is found in the cytoplasm. It carries out the reaction an aromatic L-alpha-amino acid + 2-oxoglutarate = an aromatic oxo-acid + L-glutamate. It catalyses the reaction (3S)-3-methyl-L-phenylalanine + 2-oxoglutarate = (3S)-2-oxo-3-phenylbutanoate + L-glutamate. It participates in amino-acid biosynthesis; L-phenylalanine biosynthesis; L-phenylalanine from phenylpyruvate (ArAT route): step 1/1. The protein operates within amino-acid biosynthesis; L-tyrosine biosynthesis; L-tyrosine from (4-hydroxyphenyl)pyruvate: step 1/1. Broad-specificity enzyme that catalyzes the transamination of 2-ketoisocaproate, p-hydroxyphenylpyruvate, and phenylpyruvate to yield leucine, tyrosine, and phenylalanine, respectively. In vitro, is able to catalyze the conversion of beta-methyl phenylpyruvate to the nonproteinogenic amino acid (2S,3S)-beta-methyl-phenylalanine, a building block of the antibiotic mannopeptimycin produced by Streptomyces hygroscopicus NRRL3085. In Escherichia coli (strain K12), this protein is Aromatic-amino-acid aminotransferase (tyrB).